The primary structure comprises 53 residues: Small ribosomal subunit protein uS14 (53 aa).

4 residues coordinate Zn(2+): C18, C21, C36, and C39.

This sequence belongs to the universal ribosomal protein uS14 family. Zinc-binding uS14 subfamily. In terms of assembly, part of the 30S ribosomal subunit. Zn(2+) serves as cofactor.

Functionally, binds 16S rRNA, required for the assembly of 30S particles. This is Small ribosomal subunit protein uS14 from Thermoplasma volcanium (strain ATCC 51530 / DSM 4299 / JCM 9571 / NBRC 15438 / GSS1).